The sequence spans 224 residues: Probable C-&gt;U-editing enzyme APOBEC-2 (224 aa).

Positions 1 to 25 are disordered; that stretch reads MAQKEEAAAATEAASQNGEDLENLD. 2 residues coordinate Zn(2+): glutamate 60 and histidine 98. Positions 64–169 constitute a CMP/dCMP-type deaminase domain; that stretch reads GRNKTFLCYV…LEIQDALKKL (106 aa). Catalysis depends on glutamate 100, which acts as the Proton donor. Zn(2+)-binding residues include cysteine 128 and cysteine 131.

The protein belongs to the cytidine and deoxycytidylate deaminase family. Homotetramer. The cofactor is Zn(2+).

The enzyme catalyses cytidine(6666) in apoB mRNA + H2O + H(+) = uridine(6666) in apoB mRNA + NH4(+). Probable C to U editing enzyme whose physiological substrate is not yet known. Does not display detectable apoB mRNA editing. Has a low intrinsic cytidine deaminase activity. May play a role in the epigenetic regulation of gene expression through the process of active DNA demethylation. The protein is Probable C-&gt;U-editing enzyme APOBEC-2 (APOBEC2) of Pongo pygmaeus (Bornean orangutan).